The following is a 541-amino-acid chain: Chaperonin GroEL (541 aa).

ATP is bound by residues 29 to 32 (TLGP), 86 to 90 (DGTTT), G413, 478 to 480 (NAL), and D494.

The protein belongs to the chaperonin (HSP60) family. As to quaternary structure, forms a cylinder of 14 subunits composed of two heptameric rings stacked back-to-back. Interacts with the co-chaperonin GroES.

The protein localises to the cytoplasm. The catalysed reaction is ATP + H2O + a folded polypeptide = ADP + phosphate + an unfolded polypeptide.. Functionally, together with its co-chaperonin GroES, plays an essential role in assisting protein folding. The GroEL-GroES system forms a nano-cage that allows encapsulation of the non-native substrate proteins and provides a physical environment optimized to promote and accelerate protein folding. The polypeptide is Chaperonin GroEL (Lachnoclostridium phytofermentans (strain ATCC 700394 / DSM 18823 / ISDg) (Clostridium phytofermentans)).